Reading from the N-terminus, the 57-residue chain is DNA gyrase inhibitor YacG (57 aa).

Positions 10, 13, 25, and 29 each coordinate Zn(2+).

The protein belongs to the DNA gyrase inhibitor YacG family. Interacts with GyrB. Requires Zn(2+) as cofactor.

Inhibits all the catalytic activities of DNA gyrase by preventing its interaction with DNA. Acts by binding directly to the C-terminal domain of GyrB, which probably disrupts DNA binding by the gyrase. This chain is DNA gyrase inhibitor YacG, found in Brucella melitensis biotype 1 (strain ATCC 23456 / CCUG 17765 / NCTC 10094 / 16M).